The following is a 492-amino-acid chain: Probable malate:quinone oxidoreductase 1 (492 aa).

The protein belongs to the MQO family. It depends on FAD as a cofactor.

It catalyses the reaction (S)-malate + a quinone = a quinol + oxaloacetate. It participates in carbohydrate metabolism; tricarboxylic acid cycle; oxaloacetate from (S)-malate (quinone route): step 1/1. This is Probable malate:quinone oxidoreductase 1 from Staphylococcus epidermidis (strain ATCC 35984 / DSM 28319 / BCRC 17069 / CCUG 31568 / BM 3577 / RP62A).